Here is a 120-residue protein sequence, read N- to C-terminus: UPF0102 protein CbuK_0265 (120 aa).

The protein belongs to the UPF0102 family.

The protein is UPF0102 protein CbuK_0265 of Coxiella burnetii (strain CbuK_Q154) (Coxiella burnetii (strain Q154)).